We begin with the raw amino-acid sequence, 97 residues long: MRLHFLFYRSIEFMYYKKSRHKIFCITLSLYFLTAHKRPSARNPITDFFSRIWGPCFYKWSRHQLLLVNQLMLSPCRNKCSLTSADQCITANEDTTK.

This is an uncharacterized protein from Alcelaphine herpesvirus 1 (strain C500) (AlHV-1).